A 462-amino-acid polypeptide reads, in one-letter code: Metal cation symporter ZIP14 (462 aa).

The signal sequence occupies residues 1–16 (MPLLLLSALLPFSLMA). At 17-138 (GPTPSTGKEL…PSPGEVWGYG (122 aa)) the chain is on the extracellular side. N-linked (GlcNAc...) asparagine glycans are attached at residues asparagine 42, asparagine 68, asparagine 83, and asparagine 119. Residues 139-159 (FLCVTVISLCSLFGAGVVPFM) traverse the membrane as a helical segment. Residues 160–167 (KKACYKRL) are Cytoplasmic-facing. A helical membrane pass occupies residues 168-188 (LLFCIALAIGTLFSNALFQLI). The Extracellular segment spans residues 189–201 (PEAFGFNPLEDSY). The helical transmembrane segment at 202–222 (VFTSSVIFGGFYLFFFTEKVL) threads the bilayer. At 223–322 (KMMLKQKHEH…SDGLHNFIDG (100 aa)) the chain is on the cytoplasmic side. The HHHGHXHX-motif signature appears at 230–237 (HEHGHSHY). Residues 235–285 (SHYSADTSKRDAEEGVTEKLQNGDLDHMIPPPHGSESDLRGDEKAVQQQDL) are disordered. Composition is skewed to basic and acidic residues over residues 241 to 251 (TSKRDAEEGVT) and 269 to 279 (SESDLRGDEKA). Residues 323–343 (LAIGASFTVSVFQGVSTSIAI) traverse the membrane as a helical segment. At 344–367 (LCEEFPHELGDFVILLNAGMSIPQ) the chain is on the extracellular side. The XEXPHE-motif motif lies at 346–351 (EEFPHE). Residues 368-388 (ALFFNFLSACCCYLGLAFGIL) traverse the membrane as a helical segment. Over 389-396 (AGSHFSSN) the chain is Cytoplasmic. The helical transmembrane segment at 397-417 (WIFALAGGMFLYIALSDMFPE) threads the bilayer. Residues 418–431 (MNEVSKEDEEGGRA) lie on the Extracellular side of the membrane. The helical transmembrane segment at 432–452 (FSAFMIQNAGLLTGFAIMLLL) threads the bilayer. The Cytoplasmic segment spans residues 453–462 (TTFSGQIQLG).

The protein belongs to the ZIP transporter (TC 2.A.5) family. In terms of assembly, homotrimer.

Its subcellular location is the cell membrane. It localises to the apical cell membrane. It is found in the basolateral cell membrane. The protein resides in the early endosome membrane. The protein localises to the late endosome membrane. Its subcellular location is the lysosome membrane. It carries out the reaction Zn(2+)(out) + 2 hydrogencarbonate(out) = Zn(2+)(in) + 2 hydrogencarbonate(in). The enzyme catalyses Mn(2+)(out) + 2 hydrogencarbonate(out) = Mn(2+)(in) + 2 hydrogencarbonate(in). The catalysed reaction is Fe(2+)(out) + 2 hydrogencarbonate(out) = Fe(2+)(in) + 2 hydrogencarbonate(in). It catalyses the reaction Cd(2+)(out) + 2 hydrogencarbonate(out) = Cd(2+)(in) + 2 hydrogencarbonate(in). Its function is as follows. Electroneutral transporter of the plasma membrane mediating the cellular uptake of the divalent metal cations zinc, manganese and iron that are important for tissue homeostasis, metabolism, development and immunity. Functions as an energy-dependent symporter, transporting through the membranes an electroneutral complex composed of a divalent metal cation and two bicarbonate anions. Beside these endogenous cellular substrates, can also import cadmium a non-essential metal which is cytotoxic and carcinogenic. The polypeptide is Metal cation symporter ZIP14 (Xenopus tropicalis (Western clawed frog)).